Here is a 218-residue protein sequence, read N- to C-terminus: Flagellin B1 (218 aa).

Residues 1–12 constitute a propeptide that is removed on maturation; it reads MNIKEFLSNKKG. N-linked (GlcNAc...) asparagine glycosylation is found at asparagine 38, asparagine 71, asparagine 77, asparagine 115, and asparagine 136.

Belongs to the archaeal flagellin family. N-linked glycans consist of the 779 Da trisaccharide beta-ManNAc(Thr)-(1-4)-beta-GlcNAc3NAcA-(1-3)-beta-GlcNAc.

The protein localises to the archaeal flagellum. In terms of biological role, flagellin is the subunit protein which polymerizes to form the filaments of archaeal flagella. The sequence is that of Flagellin B1 (flaB1) from Methanococcus voltae.